The primary structure comprises 541 residues: uncharacterized protein (541 aa).

12 helical membrane passes run 99-119 (WIVVVQISLIAFVVTFGSSVY), 131-153 (GVSISVSSLGSCVFLVGFGFGSL), 165-185 (FVVYFCTLLMFTLFQIGGGCA), 187-207 (NIWTLVILRFFQGFFGSTPLS), 224-244 (YVLPGFCTFPFLGPIFGPIIG), 256-276 (WVFWINMIMGAVVIVIIFFFM), 325-345 (LLITEPIVVCFTLYLTVVYII), 367-387 (IGLSFIGIGIGIVLAGACTPI), 409-429 (LYPLFFGSIMLPISMFWFAWT), 439-459 (WIVPLISSIFFGWSLLFVFFV), 472-494 (AASALAAATLVRYAASGGMSLVG), and 508-528 (SLLGFISVGMIPIPFLFFIYG).

It belongs to the major facilitator superfamily. CAR1 family.

It localises to the membrane. This is an uncharacterized protein from Schizosaccharomyces pombe (strain 972 / ATCC 24843) (Fission yeast).